Here is a 111-residue protein sequence, read N- to C-terminus: Somatostatin-1B (111 aa).

A signal peptide spans 1–19 (MQLLSSLVSLLLVLYSVRA). Positions 20-87 (AAVLPVEERN…RLEERAVYNR (68 aa)) are excised as a propeptide. A disulfide bond links cysteine 100 and cysteine 111.

It belongs to the somatostatin family.

It is found in the secreted. Somatostatin inhibits the release of somatotropin. The protein is Somatostatin-1B (sst1b) of Carassius auratus (Goldfish).